The primary structure comprises 155 residues: Small ribosomal subunit protein uS7 (155 aa).

Belongs to the universal ribosomal protein uS7 family. As to quaternary structure, part of the 30S ribosomal subunit. Contacts proteins S9 and S11.

In terms of biological role, one of the primary rRNA binding proteins, it binds directly to 16S rRNA where it nucleates assembly of the head domain of the 30S subunit. Is located at the subunit interface close to the decoding center, probably blocks exit of the E-site tRNA. This is Small ribosomal subunit protein uS7 from Thermotoga petrophila (strain ATCC BAA-488 / DSM 13995 / JCM 10881 / RKU-1).